The primary structure comprises 369 residues: Aminomethyltransferase (369 aa).

The protein belongs to the GcvT family. The glycine cleavage system is composed of four proteins: P, T, L and H.

It carries out the reaction N(6)-[(R)-S(8)-aminomethyldihydrolipoyl]-L-lysyl-[protein] + (6S)-5,6,7,8-tetrahydrofolate = N(6)-[(R)-dihydrolipoyl]-L-lysyl-[protein] + (6R)-5,10-methylene-5,6,7,8-tetrahydrofolate + NH4(+). The glycine cleavage system catalyzes the degradation of glycine. The polypeptide is Aminomethyltransferase (Synechococcus sp. (strain CC9311)).